The chain runs to 258 residues: Type III pantothenate kinase (258 aa).

Asp6–Val13 contributes to the ATP binding site. Gly108–Arg111 contributes to the substrate binding site. Asp110 acts as the Proton acceptor in catalysis. Residue Asp130 participates in K(+) binding. Position 133 (Thr133) interacts with ATP. Residue Thr185 participates in substrate binding.

Belongs to the type III pantothenate kinase family. As to quaternary structure, homodimer. The cofactor is NH4(+). K(+) is required as a cofactor.

It is found in the cytoplasm. It carries out the reaction (R)-pantothenate + ATP = (R)-4'-phosphopantothenate + ADP + H(+). The protein operates within cofactor biosynthesis; coenzyme A biosynthesis; CoA from (R)-pantothenate: step 1/5. Its function is as follows. Catalyzes the phosphorylation of pantothenate (Pan), the first step in CoA biosynthesis. This Thermobifida fusca (strain YX) protein is Type III pantothenate kinase.